A 700-amino-acid chain; its full sequence is pH-response regulator protein palI/prr-5 (700 aa).

At 1–8 (MLRPATPL) the chain is on the cytoplasmic side. Residues 9–29 (AVLLFAAFGLLTLATISTPII) traverse the membrane as a helical segment. Over 30–90 (KQIPLSSFEI…PRATRSTLSS (61 aa)) the chain is Extracellular. A helical membrane pass occupies residues 91 to 111 (ILIVHPVAALITLINFVLAIV). Residues 112 to 123 (AHFHSPSHSARY) lie on the Cytoplasmic side of the membrane. A helical transmembrane segment spans residues 124 to 144 (LLILFIVSFVDFIVCLLCFLV). The Extracellular portion of the chain corresponds to 145 to 152 (DVLLFIPH). A helical transmembrane segment spans residues 153-173 (LSWGSYIVVAATILVAFCGLV). Over 174–700 (TCAMRRTLVN…GNMPRAAGPR (527 aa)) the chain is Cytoplasmic. Disordered regions lie at residues 226–491 (SGAN…GIRD), 507–560 (VPDP…PISE), and 573–700 (DVDP…AGPR). A compositionally biased stretch (basic and acidic residues) spans 234-252 (KLPEFTTFEKKDDRSEERI). Gly residues predominate over residues 320–378 (GRGGMPPGGYRGRGGFPGPGRGGGPPQNGRGGYGPPGRGRGGYGPPPRGYGGPGPRGGR). Over residues 414-424 (SPYANRQQSPG) the composition is skewed to polar residues. Polar residues-rich tracts occupy residues 593–603 (SMQSPPASNSY) and 615–637 (ESENSNFTSISQRGINPRWNSAN). Over residues 657 to 671 (VVPRRPVNRPGAGPA) the composition is skewed to low complexity.

It belongs to the palI/RIM9 family.

Its subcellular location is the cell membrane. Its function is as follows. Required for the proteolytic cleavage of the transcription factor pacc-1 in response to alkaline ambient pH. The polypeptide is pH-response regulator protein palI/prr-5 (prr-5) (Neurospora crassa (strain ATCC 24698 / 74-OR23-1A / CBS 708.71 / DSM 1257 / FGSC 987)).